The primary structure comprises 469 residues: Putative arginine/ornithine antiporter (469 aa).

12 consecutive transmembrane segments (helical) span residues 8–28 (GFWL…IFSL), 44–64 (AWLL…HLSI), 90–110 (AGFT…VAII), 144–164 (LTFA…VASI), 179–199 (VLGF…SLFG), 213–233 (IGIG…FVGI), 254–274 (ITGL…TMGV), 301–321 (VIMA…WILL), 347–367 (SPVI…FSVI), 375–395 (FTFL…VSAI), 417–437 (DGLI…TGTA), and 439–459 (LTTF…YPFV).

It belongs to the amino acid-polyamine-organocation (APC) superfamily. Basic amino acid/polyamine antiporter (APA) (TC 2.A.3.2) family.

The protein resides in the cell membrane. It catalyses the reaction L-ornithine(in) + L-arginine(out) = L-ornithine(out) + L-arginine(in). In terms of biological role, catalyzes electroneutral exchange between L-arginine and L-ornithine. In Bacillus subtilis (strain 168), this protein is Putative arginine/ornithine antiporter (yvsH).